We begin with the raw amino-acid sequence, 304 residues long: Elongation factor Ts (304 aa).

An involved in Mg(2+) ion dislocation from EF-Tu region spans residues 82–85 (TDFV).

It belongs to the EF-Ts family.

It localises to the cytoplasm. Associates with the EF-Tu.GDP complex and induces the exchange of GDP to GTP. It remains bound to the aminoacyl-tRNA.EF-Tu.GTP complex up to the GTP hydrolysis stage on the ribosome. The protein is Elongation factor Ts of Symbiobacterium thermophilum (strain DSM 24528 / JCM 14929 / IAM 14863 / T).